The chain runs to 308 residues: UDP-N-acetylenolpyruvoylglucosamine reductase 2 (308 aa).

The region spanning 31-197 (RIGGPADYLV…AEVVMALRPA (167 aa)) is the FAD-binding PCMH-type domain. R176 is an active-site residue. Residue S226 is the Proton donor of the active site. Residue E296 is part of the active site.

The protein belongs to the MurB family. FAD serves as cofactor.

The protein resides in the cytoplasm. The enzyme catalyses UDP-N-acetyl-alpha-D-muramate + NADP(+) = UDP-N-acetyl-3-O-(1-carboxyvinyl)-alpha-D-glucosamine + NADPH + H(+). It participates in cell wall biogenesis; peptidoglycan biosynthesis. In terms of biological role, cell wall formation. This is UDP-N-acetylenolpyruvoylglucosamine reductase 2 from Symbiobacterium thermophilum (strain DSM 24528 / JCM 14929 / IAM 14863 / T).